A 224-amino-acid polypeptide reads, in one-letter code: MQVLASLFGQSPFAPLQAHLELVSSTINVLFPLFSALKEGDYERVGVLAQLVSSKERQADGMKNDVRRHLASGVFLPVSRAALLEIISIQDSLADCAEDIAILLTVKELQFYPEFEELFFEFLQKTVQSFEAVAKTIREMDRLLESSFGGNRADKTRVLVSEVSNLEHECDLLQRELMKVFFSDDFAIGTKGFVLWMQIIKGISGISNNSEKLAYRVSMTLEEK.

Belongs to the UPF0111 family.

This is UPF0111 protein CT_691 from Chlamydia trachomatis serovar D (strain ATCC VR-885 / DSM 19411 / UW-3/Cx).